The sequence spans 187 residues: Threonylcarbamoyl-AMP synthase (187 aa).

In terms of domain architecture, YrdC-like spans 4–187 (TLTLSEAVTA…DARSGHILRL (184 aa)).

This sequence belongs to the SUA5 family. TsaC subfamily.

It localises to the cytoplasm. It carries out the reaction L-threonine + hydrogencarbonate + ATP = L-threonylcarbamoyladenylate + diphosphate + H2O. Required for the formation of a threonylcarbamoyl group on adenosine at position 37 (t(6)A37) in tRNAs that read codons beginning with adenine. Catalyzes the conversion of L-threonine, HCO(3)(-)/CO(2) and ATP to give threonylcarbamoyl-AMP (TC-AMP) as the acyladenylate intermediate, with the release of diphosphate. The protein is Threonylcarbamoyl-AMP synthase of Xylella fastidiosa (strain 9a5c).